We begin with the raw amino-acid sequence, 293 residues long: Shikimate kinase (293 aa).

87-97 (PLAGGLKSSSA) contacts ATP.

The protein belongs to the GHMP kinase family. Archaeal shikimate kinase subfamily.

The protein resides in the cytoplasm. It carries out the reaction shikimate + ATP = 3-phosphoshikimate + ADP + H(+). Its pathway is metabolic intermediate biosynthesis; chorismate biosynthesis; chorismate from D-erythrose 4-phosphate and phosphoenolpyruvate: step 5/7. The polypeptide is Shikimate kinase (Methanosarcina mazei (strain ATCC BAA-159 / DSM 3647 / Goe1 / Go1 / JCM 11833 / OCM 88) (Methanosarcina frisia)).